Reading from the N-terminus, the 97-residue chain is Protein ParC (97 aa).

The sequence is that of Protein ParC (parC) from Escherichia coli.